A 167-amino-acid polypeptide reads, in one-letter code: Caffeine dehydrogenase subunit gamma (167 aa).

In terms of domain architecture, 2Fe-2S ferredoxin-type spans 4–80 (HVISLTVNGQ…GHSIRTVEAL (77 aa)). [2Fe-2S] cluster is bound by residues Cys-42, Cys-47, Cys-50, and Cys-62.

Heterotrimer composed of an alpha (CdhA), a beta (CdhB) and a gamma (CdhC) subunit.

It catalyses the reaction caffeine + a ubiquinone + H2O = 1,3,7-trimethylurate + a ubiquinol. The enzyme catalyses ubiquinone-0 + caffeine + H2O = ubiquinol-0 + 1,3,7-trimethylurate. The catalysed reaction is theobromine + a ubiquinone + H2O = 3,7-dimethylurate + a ubiquinol. Functionally, component of the caffeine dehydrogenase complex that catalyzes the hydrolytical oxidation of 1,3,7-trimethylxanthine (caffeine) by incorporation of an oxygen atom originating from a water molecule into position C-8 to produce 1,3,7-trimethyluric acid (TMU). Coenzyme Q0 (ubiquinone-0) is the preferred electron acceptor and, to a lesser extent, coenzyme Q2 (ubiquinone-2) can also be used, but oxygen and NAD(P)(+) cannot. Is involved in a caffeine degradation pathway that allows Pseudomonas sp. strain CBB1 to grow on caffeine as the sole carbon and nitrogen source. Is also active with theobromine as substrate, but shows a very poor activity with theophylline and is not active with xanthine, 3-methylxanthine, 7-methylxanthine, TMU, and 3,7-dimethylurate. This is Caffeine dehydrogenase subunit gamma from Pseudomonas sp. (strain CBB1).